We begin with the raw amino-acid sequence, 388 residues long: Succinate--CoA ligase [ADP-forming] subunit beta (388 aa).

The 236-residue stretch at 9 to 244 (KEILRKYNVP…LDEEDANEIE (236 aa)) folds into the ATP-grasp domain. Residues Lys-46, 53 to 55 (GRG), Glu-99, Ala-102, and Glu-107 contribute to the ATP site. Residues Asn-199 and Asp-213 each coordinate Mg(2+). Residues Asn-264 and 321–323 (GIM) contribute to the substrate site.

The protein belongs to the succinate/malate CoA ligase beta subunit family. In terms of assembly, heterotetramer of two alpha and two beta subunits. The cofactor is Mg(2+).

It catalyses the reaction succinate + ATP + CoA = succinyl-CoA + ADP + phosphate. It carries out the reaction GTP + succinate + CoA = succinyl-CoA + GDP + phosphate. Its pathway is carbohydrate metabolism; tricarboxylic acid cycle; succinate from succinyl-CoA (ligase route): step 1/1. Functionally, succinyl-CoA synthetase functions in the citric acid cycle (TCA), coupling the hydrolysis of succinyl-CoA to the synthesis of either ATP or GTP and thus represents the only step of substrate-level phosphorylation in the TCA. The beta subunit provides nucleotide specificity of the enzyme and binds the substrate succinate, while the binding sites for coenzyme A and phosphate are found in the alpha subunit. In Cupriavidus necator (strain ATCC 17699 / DSM 428 / KCTC 22496 / NCIMB 10442 / H16 / Stanier 337) (Ralstonia eutropha), this protein is Succinate--CoA ligase [ADP-forming] subunit beta.